We begin with the raw amino-acid sequence, 225 residues long: MGHKVNPIGLRLGINRTWDSRWYAGADYSRLLHDDLKLRAHLRRKLSGAGVSRVVIERPAKKPRVTIYAARPGVVIGKKGQDIDVLRKDLTRMAKTDVALNIVEIRKPEIDATLVAENIAQQLERRVAFRRAMKRAVQSAMRLGAQGIRINCGGRLGGAEIARVEWYREGRVPLHTLRADIDYGVATAKTTYGTCGVKVWIFKGEILAHDPLAQDRRAAEQAPQR.

One can recognise a KH type-2 domain in the interval 38–106 (LRAHLRRKLS…DVALNIVEIR (69 aa)).

The protein belongs to the universal ribosomal protein uS3 family. In terms of assembly, part of the 30S ribosomal subunit. Forms a tight complex with proteins S10 and S14.

Functionally, binds the lower part of the 30S subunit head. Binds mRNA in the 70S ribosome, positioning it for translation. In Gluconacetobacter diazotrophicus (strain ATCC 49037 / DSM 5601 / CCUG 37298 / CIP 103539 / LMG 7603 / PAl5), this protein is Small ribosomal subunit protein uS3.